Consider the following 341-residue polypeptide: Methionine import ATP-binding protein MetN 1 (341 aa).

An ABC transporter domain is found at 2–241; the sequence is IEFKNVNKVF…PQTNTAKNFV (240 aa). 38–45 contributes to the ATP binding site; sequence GYSGAGKS.

This sequence belongs to the ABC transporter superfamily. Methionine importer (TC 3.A.1.24) family. In terms of assembly, the complex is composed of two ATP-binding proteins (MetN), two transmembrane proteins (MetI) and a solute-binding protein (MetQ).

Its subcellular location is the cell membrane. It carries out the reaction L-methionine(out) + ATP + H2O = L-methionine(in) + ADP + phosphate + H(+). It catalyses the reaction D-methionine(out) + ATP + H2O = D-methionine(in) + ADP + phosphate + H(+). Its function is as follows. Part of the ABC transporter complex MetNIQ involved in methionine import. Responsible for energy coupling to the transport system. The chain is Methionine import ATP-binding protein MetN 1 from Staphylococcus epidermidis (strain ATCC 35984 / DSM 28319 / BCRC 17069 / CCUG 31568 / BM 3577 / RP62A).